Consider the following 459-residue polypeptide: Pup--protein ligase (459 aa).

Residue E9 participates in Mg(2+) binding. Position 54 (R54) interacts with ATP. Mg(2+) is bound at residue Y56. D58 acts as the Proton acceptor in catalysis. Residue E64 coordinates Mg(2+). 2 residues coordinate ATP: T67 and W421.

It belongs to the Pup ligase/Pup deamidase family. Pup-conjugating enzyme subfamily.

The catalysed reaction is ATP + [prokaryotic ubiquitin-like protein]-L-glutamate + [protein]-L-lysine = ADP + phosphate + N(6)-([prokaryotic ubiquitin-like protein]-gamma-L-glutamyl)-[protein]-L-lysine.. It functions in the pathway protein degradation; proteasomal Pup-dependent pathway. It participates in protein modification; protein pupylation. Functionally, catalyzes the covalent attachment of the prokaryotic ubiquitin-like protein modifier Pup to the proteasomal substrate proteins, thereby targeting them for proteasomal degradation. This tagging system is termed pupylation. The ligation reaction involves the side-chain carboxylate of the C-terminal glutamate of Pup and the side-chain amino group of a substrate lysine. In Jonesia denitrificans (strain ATCC 14870 / DSM 20603 / BCRC 15368 / CIP 55.134 / JCM 11481 / NBRC 15587 / NCTC 10816 / Prevot 55134) (Listeria denitrificans), this protein is Pup--protein ligase.